The sequence spans 494 residues: MVSRRGSETKAIVCVLTDRIRISNQWVSHLSFAGLLGVAGFVFAQQHGLFRNLNNLKLFSGREKDSGDDSFLVPGLQNLGNNCFLNVILQALASCKDFRSFLQWVLEDARGSLAGEQEEQLPLTFALSALLQELGTVGSRRSVSNPRKVMVTLTDYAKNFNLTSQQDAAEALLHLISSLQEEIVVCYRPSQSSNLSDILFSRNLRMLAPSEGLHGLMELKRWHKHLRGPFDGILGSTLMCRTCSSQISLEFQFFHTLPLSPLLHHGGYNIMSGCTLEHCLKKFLNTEKVENYFCYRCWHGAALKYLSVIGAAETEIEKLRSCGGEDQCDCKTSLHLQRMPWSNSYSHILKQLIIARFPKLLCIQVQRASFNMFEEFKLSGHIAFPLVLNLSLFTPSSIGVNIEERIEMSSEYQKPEASKNHGMYRLVTVVEHFGRTGSGHYTVYRSVRVFSQEEEEEDCDEDLSWFSISDSEVCRVSESDVLGAEASLLFYERL.

Residues Leu-30 to Phe-50 traverse the membrane as a helical segment. In terms of domain architecture, USP spans Pro-74–Leu-494. Residue Cys-83 is the Nucleophile of the active site. His-440 serves as the catalytic Proton acceptor.

It belongs to the peptidase C19 family.

It localises to the membrane. The enzyme catalyses Thiol-dependent hydrolysis of ester, thioester, amide, peptide and isopeptide bonds formed by the C-terminal Gly of ubiquitin (a 76-residue protein attached to proteins as an intracellular targeting signal).. In terms of biological role, recognizes and hydrolyzes the peptide bond at the C-terminal Gly of ubiquitin. Involved in the processing of poly-ubiquitin precursors as well as that of ubiquitinated proteins. The polypeptide is Ubiquitin carboxyl-terminal hydrolase 27 (UBP27) (Arabidopsis thaliana (Mouse-ear cress)).